The sequence spans 117 residues: UPF0122 protein Dred_2057 (117 aa).

The protein belongs to the UPF0122 family.

Its function is as follows. Might take part in the signal recognition particle (SRP) pathway. This is inferred from the conservation of its genetic proximity to ftsY/ffh. May be a regulatory protein. The chain is UPF0122 protein Dred_2057 from Desulforamulus reducens (strain ATCC BAA-1160 / DSM 100696 / MI-1) (Desulfotomaculum reducens).